Reading from the N-terminus, the 397-residue chain is Riboflavin biosynthesis protein RibBA (397 aa).

Positions 1 to 199 are DHBP synthase; the sequence is MFHRIEEALE…IEDLIAYRRH (199 aa). D-ribulose 5-phosphate-binding positions include 26–27, Asp-31, 138–142, and Glu-162; these read RE and RAGHT. Glu-27 lines the Mg(2+) pocket. Residue His-141 coordinates Mg(2+). Positions 200–397 are GTP cyclohydrolase II; it reads HETLVTREVE…ASKLGHLLNL (198 aa). Position 250–254 (250–254) interacts with GTP; sequence RVHSE. Residues Cys-255, Cys-266, and Cys-268 each coordinate Zn(2+). Residues Gln-271, 293–295, and Thr-315 contribute to the GTP site; that span reads EGR. The Proton acceptor; for GTP cyclohydrolase activity role is filled by Asp-327. The Nucleophile; for GTP cyclohydrolase activity role is filled by Arg-329. 2 residues coordinate GTP: Thr-350 and Lys-355.

The protein in the N-terminal section; belongs to the DHBP synthase family. This sequence in the C-terminal section; belongs to the GTP cyclohydrolase II family. It depends on Mg(2+) as a cofactor. Requires Mn(2+) as cofactor. The cofactor is Zn(2+).

The enzyme catalyses D-ribulose 5-phosphate = (2S)-2-hydroxy-3-oxobutyl phosphate + formate + H(+). It catalyses the reaction GTP + 4 H2O = 2,5-diamino-6-hydroxy-4-(5-phosphoribosylamino)-pyrimidine + formate + 2 phosphate + 3 H(+). The protein operates within cofactor biosynthesis; riboflavin biosynthesis; 2-hydroxy-3-oxobutyl phosphate from D-ribulose 5-phosphate: step 1/1. Its pathway is cofactor biosynthesis; riboflavin biosynthesis; 5-amino-6-(D-ribitylamino)uracil from GTP: step 1/4. Functionally, catalyzes the conversion of D-ribulose 5-phosphate to formate and 3,4-dihydroxy-2-butanone 4-phosphate. Catalyzes the conversion of GTP to 2,5-diamino-6-ribosylamino-4(3H)-pyrimidinone 5'-phosphate (DARP), formate and pyrophosphate. This Bacillus mycoides (strain KBAB4) (Bacillus weihenstephanensis) protein is Riboflavin biosynthesis protein RibBA.